Consider the following 447-residue polypeptide: tRNA threonylcarbamoyladenosine dehydratase 2 (447 aa).

The next 3 membrane-spanning stretches (helical) occupy residues 9–29 (LITA…YAWT), 86–106 (NQYV…NSLV), and 294–314 (ILPV…TWIL).

It belongs to the HesA/MoeB/ThiF family.

It is found in the mitochondrion outer membrane. Catalyzes the ATP-dependent dehydration of threonylcarbamoyladenosine at position 37 (t(6)A37) to form cyclic t(6)A37 (ct(6)A37) in tRNAs that read codons beginning with adenine. This Saccharomyces cerevisiae (strain ATCC 204508 / S288c) (Baker's yeast) protein is tRNA threonylcarbamoyladenosine dehydratase 2 (TCD2).